Reading from the N-terminus, the 420-residue chain is Glutamyl-tRNA reductase (420 aa).

Substrate contacts are provided by residues 49–52, S109, 114–116, and Q120; these read TCNR and EPQ. The active-site Nucleophile is the C50. 189–194 lines the NADP(+) pocket; it reads GAGETI.

This sequence belongs to the glutamyl-tRNA reductase family. In terms of assembly, homodimer.

The catalysed reaction is (S)-4-amino-5-oxopentanoate + tRNA(Glu) + NADP(+) = L-glutamyl-tRNA(Glu) + NADPH + H(+). It participates in porphyrin-containing compound metabolism; protoporphyrin-IX biosynthesis; 5-aminolevulinate from L-glutamyl-tRNA(Glu): step 1/2. Functionally, catalyzes the NADPH-dependent reduction of glutamyl-tRNA(Glu) to glutamate 1-semialdehyde (GSA). This is Glutamyl-tRNA reductase from Edwardsiella ictaluri (strain 93-146).